A 445-amino-acid polypeptide reads, in one-letter code: Squalene synthase (445 aa).

Helical transmembrane passes span 291 to 311 (STFT…DLVY) and 405 to 425 (LIVC…IAYV).

The protein belongs to the phytoene/squalene synthase family. Mg(2+) is required as a cofactor.

It localises to the endoplasmic reticulum membrane. It catalyses the reaction 2 (2E,6E)-farnesyl diphosphate + NADPH + H(+) = squalene + 2 diphosphate + NADP(+). The enzyme catalyses 2 (2E,6E)-farnesyl diphosphate + NADH + H(+) = squalene + 2 diphosphate + NAD(+). The protein operates within terpene metabolism; lanosterol biosynthesis; lanosterol from farnesyl diphosphate: step 1/3. Catalyzes the condensation of 2 two farnesyl pyrophosphate moieties to form squalene. It is the first committed enzyme of the sterol biosynthesis pathway. Required for the biosynthesis of ergosterol. In Yarrowia lipolytica (strain CLIB 122 / E 150) (Yeast), this protein is Squalene synthase (SQS1).